The following is a 239-amino-acid chain: Dihydromethanopterin reductase (acceptor) (239 aa).

4Fe-4S ferredoxin-type domains follow at residues 144 to 175 (MPYNIDRKQCKHCETCPPRENCPHEAISEKNG) and 176 to 205 (VTDQIDLLKCKGCGICKELCPYNAIKGGPV). Residues Cys-153, Cys-156, Cys-159, Cys-165, Cys-185, Cys-188, Cys-191, and Cys-195 each contribute to the [4Fe-4S] cluster site.

Homodimer. [4Fe-4S] cluster serves as cofactor.

It catalyses the reaction 5,6,7,8-tetrahydromethanopterin + A = 7,8-dihydromethanopterin + AH2. It functions in the pathway cofactor biosynthesis; 5,6,7,8-tetrahydromethanopterin biosynthesis. In terms of biological role, involved in the biosynthesis of tetrahydromethanopterin, a coenzyme used in methanogenesis. Catalyzes the reduction of dihydromethanopterin (H(2)MPT) to tetrahydromethanopterin (H(4)MPT). Ferredoxin may serve as an electron donor. This chain is Dihydromethanopterin reductase (acceptor), found in Methanosarcina mazei (strain ATCC BAA-159 / DSM 3647 / Goe1 / Go1 / JCM 11833 / OCM 88) (Methanosarcina frisia).